A 191-amino-acid chain; its full sequence is Holliday junction branch migration complex subunit RuvA (191 aa).

The segment at 1–64 (MIGSITGNVE…DNITQLYGFL (64 aa)) is domain I. The segment at 65–142 (NRQEQDYLKM…KMPIEETFSI (78 aa)) is domain II. The interval 143-146 (IEND) is flexible linker. A domain III region spans residues 146–191 (DDSLAALISLGYEKLKAFNVIQEIKSKTPDASTQEVIRKALQKLSQ).

Belongs to the RuvA family. As to quaternary structure, homotetramer. Forms an RuvA(8)-RuvB(12)-Holliday junction (HJ) complex. HJ DNA is sandwiched between 2 RuvA tetramers; dsDNA enters through RuvA and exits via RuvB. An RuvB hexamer assembles on each DNA strand where it exits the tetramer. Each RuvB hexamer is contacted by two RuvA subunits (via domain III) on 2 adjacent RuvB subunits; this complex drives branch migration. In the full resolvosome a probable DNA-RuvA(4)-RuvB(12)-RuvC(2) complex forms which resolves the HJ.

The protein localises to the cytoplasm. The RuvA-RuvB-RuvC complex processes Holliday junction (HJ) DNA during genetic recombination and DNA repair, while the RuvA-RuvB complex plays an important role in the rescue of blocked DNA replication forks via replication fork reversal (RFR). RuvA specifically binds to HJ cruciform DNA, conferring on it an open structure. The RuvB hexamer acts as an ATP-dependent pump, pulling dsDNA into and through the RuvAB complex. HJ branch migration allows RuvC to scan DNA until it finds its consensus sequence, where it cleaves and resolves the cruciform DNA. This chain is Holliday junction branch migration complex subunit RuvA, found in Ehrlichia ruminantium (strain Welgevonden).